An 834-amino-acid polypeptide reads, in one-letter code: ABC transporter A family member 11 (834 aa).

Transmembrane regions (helical) follow at residues 35 to 55 (FFIL…ILNN), 188 to 208 (MPMI…ILIV), 235 to 255 (VFDY…LYSF), 269 to 289 (FLLF…LQFI), 297 to 319 (NKWL…SVAF), 324 to 346 (PLIV…LKAL), and 355 to 375 (SYTI…IYFI). In terms of domain architecture, ABC transporter spans 452-693 (LDKPSIIERC…YGSGYTIDII (242 aa)). An ATP-binding site is contributed by 495-502 (GPNGSGKS). A compositionally biased stretch (polar residues) spans 779–789 (KQQTNNKSNII). The disordered stretch occupies residues 779 to 834 (KQQTNNKSNIINNNNNNNNNNNNNNNNNNNNNNNNNNNNNNNNNTNNNTNNNQLIN). The segment covering 790–834 (NNNNNNNNNNNNNNNNNNNNNNNNNNNNNNNNNTNNNTNNNQLIN) has biased composition (low complexity).

The protein belongs to the ABC transporter superfamily. ABCA family.

Its subcellular location is the membrane. The protein is ABC transporter A family member 11 (abcA11) of Dictyostelium discoideum (Social amoeba).